We begin with the raw amino-acid sequence, 416 residues long: Carboxypeptidase B (416 aa).

An N-terminal signal peptide occupies residues 1–15 (MAFLILVTLALASAH). Positions 16–109 (YSGEHFEGEK…LEGQFGRQVP (94 aa)) are cleaved as a propeptide — activation peptide. The region spanning 117-411 (KYNRWETIEA…LAIKHLARYV (295 aa)) is the Peptidase M14 domain. Zn(2+) contacts are provided by H175 and E178. Substrate is bound by residues 175-178 (HARE), R233, and 250-251 (TR). Disulfide bonds link C244-C267 and C258-C272. H303 contributes to the Zn(2+) binding site. Substrate-binding positions include 304–305 (SY) and Y355. E377 (proton donor/acceptor) is an active-site residue.

Belongs to the peptidase M14 family. It depends on Zn(2+) as a cofactor.

Its subcellular location is the secreted. The protein resides in the zymogen granule lumen. The enzyme catalyses Preferential release of a C-terminal lysine or arginine amino acid.. This is Carboxypeptidase B (CPB1) from Canis lupus familiaris (Dog).